The following is a 137-amino-acid chain: Peptide methionine sulfoxide reductase MsrB (137 aa).

A MsrB domain is found at 7-129 (AEELKKNLSE…NSASLRFTDG (123 aa)). 4 residues coordinate Zn(2+): cysteine 46, cysteine 49, cysteine 95, and cysteine 98. Cysteine 118 serves as the catalytic Nucleophile.

This sequence belongs to the MsrB Met sulfoxide reductase family. The cofactor is Zn(2+).

It catalyses the reaction L-methionyl-[protein] + [thioredoxin]-disulfide + H2O = L-methionyl-(R)-S-oxide-[protein] + [thioredoxin]-dithiol. This chain is Peptide methionine sulfoxide reductase MsrB, found in Escherichia coli O8 (strain IAI1).